Here is a 232-residue protein sequence, read N- to C-terminus: MSAPHTSSPRTAALIPAAGSGTRLGLGPKAFVEVAGRSLLARSVAALAPFVDEVVVALPAGMDLPAGVPARAIVGGETRQGSVRRLLEATEAGTVLIHDAARPFVPPPVILALLDAIAATGAATVALPVADTLVRAEGQSWGQLVPREGLWAVQTPQGFRRELLLQAHARAEAEQYAATDDAGLLARLGVQVRLVPGDARLFKVTTPGDLALAEALTGHVDGGWLTVEGEKR.

It belongs to the IspD/TarI cytidylyltransferase family. IspD subfamily.

It catalyses the reaction 2-C-methyl-D-erythritol 4-phosphate + CTP + H(+) = 4-CDP-2-C-methyl-D-erythritol + diphosphate. Its pathway is isoprenoid biosynthesis; isopentenyl diphosphate biosynthesis via DXP pathway; isopentenyl diphosphate from 1-deoxy-D-xylulose 5-phosphate: step 2/6. In terms of biological role, catalyzes the formation of 4-diphosphocytidyl-2-C-methyl-D-erythritol from CTP and 2-C-methyl-D-erythritol 4-phosphate (MEP). The protein is 2-C-methyl-D-erythritol 4-phosphate cytidylyltransferase of Deinococcus radiodurans (strain ATCC 13939 / DSM 20539 / JCM 16871 / CCUG 27074 / LMG 4051 / NBRC 15346 / NCIMB 9279 / VKM B-1422 / R1).